Here is a 137-residue protein sequence, read N- to C-terminus: Protein shisa-5 (137 aa).

A helical transmembrane segment spans residues Phe3–Ile23.

It belongs to the shisa family. In terms of assembly, interacts with PDCD6; PDCD6 can stabilize SHISA5.

Its subcellular location is the endoplasmic reticulum membrane. The protein localises to the nucleus membrane. Functionally, can induce apoptosis in a caspase-dependent manner and plays a role in p53/TP53-dependent apoptosis. This chain is Protein shisa-5 (SHISA5), found in Pongo abelii (Sumatran orangutan).